Reading from the N-terminus, the 574-residue chain is Transmembrane protein 108 (574 aa).

Residues tyrosine 9–valine 29 traverse the membrane as a helical segment. An interaction with SH3GL2 region spans residues glutamate 31–proline 169. Disordered stretches follow at residues proline 32–phenylalanine 352 and aspartate 364–leucine 417. Residues threonine 58–serine 86 show a composition bias toward polar residues. Positions leucine 132–alanine 160 are enriched in low complexity. Residues arginine 173–serine 406 are interaction with DST (isoform 1). Residues phenylalanine 245–leucine 271 are compositionally biased toward polar residues. Residues threonine 292 to proline 312 show a composition bias toward low complexity. Polar residues predominate over residues proline 316–aspartate 332. The helical transmembrane segment at isoleucine 468–valine 488 threads the bilayer. The segment at cysteine 489 to isoleucine 574 is interaction with CYFIP2.

Interacts with DST (isoform 1). Interacts with SH3GL2. Interacts (via N-terminus) with CYFIP1 and CYFIP2; the interactions associate TMEM108 with the WAVE1 complex. Post-translationally, glycosylated. Expressed in the nervous system tissues, such as hippocampus and spinal cord, is barely detectable in peripheral tissues such as heart, lung, liver, kidney and muscle. In brain, highly expressed in dentate gyrus neurons and expressed in cortex, olfactory bulb, ammon's horn, cerebellum, hypothalamus and striatum.

Its subcellular location is the membrane. The protein localises to the postsynaptic density. The protein resides in the endosome membrane. It localises to the cell projection. It is found in the axon. Its subcellular location is the dendrite. The protein localises to the early endosome. Transmembrane protein required for proper cognitive functions. Involved in the development of dentate gyrus (DG) neuron circuitry, is necessary for AMPA receptors surface expression and proper excitatory postsynaptic currents of DG granule neurons. Regulates the organization and stability of the microtubule network of sensory neurons to allow axonal transport. Through the interaction with DST, mediates the docking of the dynein/dynactin motor complex to vesicle cargos for retrograde axonal transport. In hippocampal neurons, required for BDNF-dependent dendrite outgrowth. Cooperates with SH3GL2 and recruits the WAVE1 complex to facilitate actin-dependent BDNF:NTRK2 early endocytic trafficking and mediate signaling from early endosomes. The protein is Transmembrane protein 108 of Mus musculus (Mouse).